A 204-amino-acid polypeptide reads, in one-letter code: MEFSHPPVSVSQLGETIALVLGGKAKSVKIALGEITVTVAAADYLAAATLLRDAPGCKFEQLLDLCGLDYSEYKNGQYDGLRYCVSSHLLSVSLNQRVRLKVFCPDDDFPVVDSVNGIWNSANWFEREAFDLYGIVFEGHNDLRRILTDYGFIGHPFRKDFPTTGHVEMRYDAEQKRVIYQPVTIEPREMIPRVIREDNYGGLQ.

It belongs to the complex I 30 kDa subunit family. As to quaternary structure, NDH-1 is composed of 14 different subunits. Subunits NuoB, C, D, E, F, and G constitute the peripheral sector of the complex.

It is found in the cell inner membrane. It catalyses the reaction a quinone + NADH + 5 H(+)(in) = a quinol + NAD(+) + 4 H(+)(out). Functionally, NDH-1 shuttles electrons from NADH, via FMN and iron-sulfur (Fe-S) centers, to quinones in the respiratory chain. The immediate electron acceptor for the enzyme in this species is believed to be ubiquinone. Couples the redox reaction to proton translocation (for every two electrons transferred, four hydrogen ions are translocated across the cytoplasmic membrane), and thus conserves the redox energy in a proton gradient. This is NADH-quinone oxidoreductase subunit C from Polaromonas naphthalenivorans (strain CJ2).